A 287-amino-acid polypeptide reads, in one-letter code: Neugrin (287 aa).

An N-terminal signal peptide occupies residues 1-23 (MAFSPNVLLGGRVCAAVARSGFA). A disordered region spans residues 149 to 169 (SIPELPGPGDSSKPLSAGQSV). N202 carries N-linked (GlcNAc...) asparagine glycosylation.

This sequence belongs to the neugrin family. As to quaternary structure, forms a regulatory protein-RNA complex, consisting of RCC1L, NGRN, RPUSD3, RPUSD4, TRUB2, FASTKD2 and 16S mt-rRNA. Interacts with 16S mt-rRNA; this interaction is direct.

The protein localises to the nucleus. Its subcellular location is the secreted. It is found in the mitochondrion membrane. Its function is as follows. Plays an essential role in mitochondrial ribosome biogenesis. As a component of a functional protein-RNA module, consisting of RCC1L, NGRN, RPUSD3, RPUSD4, TRUB2, FASTKD2 and 16S mitochondrial ribosomal RNA (16S mt-rRNA), controls 16S mt-rRNA abundance and is required for intra-mitochondrial translation of core subunits of the oxidative phosphorylation system. The protein is Neugrin (NGRN) of Bos taurus (Bovine).